We begin with the raw amino-acid sequence, 1148 residues long: Autophagy-related protein 11 (1148 aa).

The AIM (Atg8-family-interacting motif) signature appears at 567-570; that stretch reads FDDI. A compositionally biased stretch (basic and acidic residues) spans 699 to 710; that stretch reads KAEASSDVEGNK. Disordered stretches follow at residues 699 to 727, 754 to 777, and 784 to 803; these read KAEASSDVEGNKTHVSGSEPMDEVSCVSN, PLDSSMLESQQNNEKGGKDSEAGE, and NSSTAESPQKSLDDNVATGR. Polar residues-rich tracts occupy residues 754–767 and 784–793; these read PLDSSMLESQQNNE and NSSTAESPQK. Coiled-coil stretches lie at residues 816–868 and 956–996; these read ELRN…HLEN and DKVS…VKTL. A Phosphothreonine modification is found at threonine 851. Residues 1130 to 1133 carry the AIM (Atg8-family-interacting motif) motif; that stretch reads YFIV.

It belongs to the ATG11 family. Homodimer. Interacts with ATG8E, ATG13A and ATG101. Binds to ATG8E on autophagic vesicles.

The protein localises to the cytoplasmic vesicle. Its subcellular location is the autophagosome. Functionally, accessory protein involved in autophagy. Acts as a scaffold protein of the ATG1-ATG13 complex for faithful delivery of autophagic vesicles to the vacuole. Involved in the stress-induced phosphorylation of ATG1A for turnover of ATG1-ATG13 complex and proper ATG1-ATG13 complex assembly or activity. Required for selective mitophagy. Required for senescence-induced breakdown of mitochondria-resident proteins and mitochondrial vesicles. Seems not essential for ATG8-mediated autophagy. The chain is Autophagy-related protein 11 from Arabidopsis thaliana (Mouse-ear cress).